We begin with the raw amino-acid sequence, 202 residues long: Glycerol-3-phosphate acyltransferase (202 aa).

Helical transmembrane passes span 2-22 (MIIVMLLLSYLIGAFPSGFVI), 54-74 (FLVTFLDIFKGFITVFFPLWL), 85-105 (FFTNGLIVGLFAILGHVYPVY), 120-140 (VVLGVNPILLLILAIIFFIIL), 141-161 (KIFKYVSLASIVAAICCVIGS), and 162-182 (LIIQDYILLVVSFLVSIILII).

The protein belongs to the PlsY family. As to quaternary structure, probably interacts with PlsX.

Its subcellular location is the cell membrane. It carries out the reaction an acyl phosphate + sn-glycerol 3-phosphate = a 1-acyl-sn-glycero-3-phosphate + phosphate. Its pathway is lipid metabolism; phospholipid metabolism. Functionally, catalyzes the transfer of an acyl group from acyl-phosphate (acyl-PO(4)) to glycerol-3-phosphate (G3P) to form lysophosphatidic acid (LPA). This enzyme utilizes acyl-phosphate as fatty acyl donor, but not acyl-CoA or acyl-ACP. In Staphylococcus aureus (strain bovine RF122 / ET3-1), this protein is Glycerol-3-phosphate acyltransferase.